Here is a 236-residue protein sequence, read N- to C-terminus: Phosphoribosylaminoimidazole-succinocarboxamide synthase (236 aa).

Belongs to the SAICAR synthetase family.

It carries out the reaction 5-amino-1-(5-phospho-D-ribosyl)imidazole-4-carboxylate + L-aspartate + ATP = (2S)-2-[5-amino-1-(5-phospho-beta-D-ribosyl)imidazole-4-carboxamido]succinate + ADP + phosphate + 2 H(+). The protein operates within purine metabolism; IMP biosynthesis via de novo pathway; 5-amino-1-(5-phospho-D-ribosyl)imidazole-4-carboxamide from 5-amino-1-(5-phospho-D-ribosyl)imidazole-4-carboxylate: step 1/2. This chain is Phosphoribosylaminoimidazole-succinocarboxamide synthase, found in Campylobacter jejuni (strain RM1221).